The primary structure comprises 229 residues: Phosphatidylinositol N-acetylglucosaminyltransferase subunit GPI15 (229 aa).

2 helical membrane-spanning segments follow: residues Ile-59–Leu-79 and Ile-101–Val-121.

This sequence belongs to the PIGH family. As to quaternary structure, component of the phosphatidylinositol N-acetylglucosaminyltransferase (GPI-GlcNAc transferase) complex composed of at least GPI1, GPI2, GPI3, GPI15, GPI19 and ERI1.

Its subcellular location is the membrane. It catalyses the reaction a 1,2-diacyl-sn-glycero-3-phospho-(1D-myo-inositol) + UDP-N-acetyl-alpha-D-glucosamine = a 6-(N-acetyl-alpha-D-glucosaminyl)-1-(1,2-diacyl-sn-glycero-3-phospho)-1D-myo-inositol + UDP + H(+). Its pathway is glycolipid biosynthesis; glycosylphosphatidylinositol-anchor biosynthesis. Part of the complex catalyzing the transfer of N-acetylglucosamine from UDP-N-acetylglucosamine to phosphatidylinositol, the first step of GPI biosynthesis. The chain is Phosphatidylinositol N-acetylglucosaminyltransferase subunit GPI15 (GPI15) from Saccharomyces cerevisiae (strain ATCC 204508 / S288c) (Baker's yeast).